The following is a 70-amino-acid chain: Translational regulator CsrA (70 aa).

This sequence belongs to the CsrA/RsmA family. As to quaternary structure, homodimer; the beta-strands of each monomer intercalate to form a hydrophobic core, while the alpha-helices form wings that extend away from the core.

Its subcellular location is the cytoplasm. In terms of biological role, a key translational regulator that binds mRNA to regulate translation initiation and/or mRNA stability. Mediates global changes in gene expression, shifting from rapid growth to stress survival by linking envelope stress, the stringent response and the catabolite repression systems. Usually binds in the 5'-UTR; binding at or near the Shine-Dalgarno sequence prevents ribosome-binding, repressing translation, binding elsewhere in the 5'-UTR can activate translation and/or stabilize the mRNA. Its function is antagonized by small RNA(s). The protein is Translational regulator CsrA of Hydrogenovibrio crunogenus (strain DSM 25203 / XCL-2) (Thiomicrospira crunogena).